Here is a 184-residue protein sequence, read N- to C-terminus: UPF0149 protein PputGB1_5261 (184 aa).

The protein belongs to the UPF0149 family.

This is UPF0149 protein PputGB1_5261 from Pseudomonas putida (strain GB-1).